Here is a 273-residue protein sequence, read N- to C-terminus: Zinc finger protein 32 (273 aa).

3 consecutive C2H2-type zinc fingers follow at residues 77–99 (YECQECGKSFRQKGSLTLHERIH), 105–127 (FECTHCGKSFRAKGNLVTHQRIH), and 133–155 (YQCKECGKSFSQRGSLAVHERLH). Zn(2+) is bound by residues C79, C82, H95, H99, C107, C110, H123, H127, S141, Q144, G157, Y161, F198, K201, L214, A218, C247, C250, H263, and C267. C2H2-type zinc fingers lie at residues 161–183 (YECAICQRSFRNQSNLAVHRRVH) and 189–211 (YRCDQCGKAFSQKGSLIVHIRVH). A C2H2-type 6 zinc finger spans residues 217–239 (YACTQCRKSFHTRGNCILHGKIH). The CCHC-type zinc-finger motif lies at 245-267 (YLCGQCGKSFTQRGSLAVHQRSC).

The protein belongs to the krueppel C2H2-type zinc-finger protein family.

The protein localises to the nucleus. Functionally, may be involved in transcriptional regulation. The sequence is that of Zinc finger protein 32 (ZNF32) from Homo sapiens (Human).